Here is a 24-residue protein sequence, read N- to C-terminus: Conotoxin PIVF (24 aa).

3 cysteine pairs are disulfide-bonded: Cys2-Cys10, Cys3-Cys15, and Cys13-Cys19. Position 24 is a lysine amide (Lys24).

It belongs to the conotoxin A superfamily. As to expression, expressed by the venom duct.

It localises to the secreted. Functionally, probable neurotoxin with ion channel inhibitor activity. In vivo, elicits dose-dependently excitatory activity upon injection into fish. Its action is slowly reversible. The polypeptide is Conotoxin PIVF (Conus purpurascens (Purple cone)).